Reading from the N-terminus, the 1182-residue chain is Tyrosine-protein kinase ABL2 (1182 aa).

2 disordered regions span residues 1 to 47 (MGQQ…TGFN) and 60 to 80 (EDGFEGDKTGGSSPEALHRPY). Residue Gly2 is the site of N-myristoyl glycine attachment. The CAP stretch occupies residues 2–106 (GQQVGRVGEA…SKENLLGATE (105 aa)). The span at 20-30 (RGIRGSSAARP) shows a compositional bias: low complexity. A Phosphoserine modification is found at Ser97. The region spanning 107–167 (SDPNLFVALY…PSNYITPVNS (61 aa)) is the SH3 domain. A phosphotyrosine mark is found at Tyr116, Tyr161, Tyr174, Tyr185, Tyr218, and Tyr231. In terms of domain architecture, SH2 spans 173–263 (WYHGPVSRSA…GLVTTLHYPA (91 aa)). Tyr261 bears the Phosphotyrosine; by ABL1 and autocatalysis mark. Position 272 is a phosphotyrosine; by autocatalysis (Tyr272). Ser275 is modified (phosphoserine). The Protein kinase domain maps to 288–539 (ITMKHKLGGG…PSFAETHQAF (252 aa)). 294–302 (LGGGQYGEV) serves as a coordination point for ATP. Residues Tyr299 and Tyr303 each carry the phosphotyrosine modification. ATP contacts are provided by residues Lys317 and 362–368 (EYMPYGN). Asp409 serves as the catalytic Proton acceptor. The Kinase activation loop signature appears at 427–451 (DFGLSRLMTGDTYTAHAGAKFPIKW). Residue Tyr439 is modified to Phosphotyrosine; by autocatalysis and SRC-type Tyr-kinases. Tyr459 bears the Phosphotyrosine mark. A Phosphotyrosine; by autocatalysis modification is found at Tyr568. The tract at residues 611-641 (IRGAQASSGSPALPRKQRDKSPSSLLEDAKE) is disordered. Phosphoserine is present on residues Ser620, Ser631, and Ser633. A Phosphotyrosine modification is found at Asp647. The interval 654 to 674 (SSFMKKRNAPTPPKRSSSFRE) is disordered. Ser655 is modified (phosphoserine). The Nuclear localization signal signature appears at 658–660 (KKR). Phosphotyrosine occurs at positions 662 and 668. 3 positions are modified to phosphoserine: Ser669, Ser670, and Ser671. Phosphotyrosine occurs at positions 683 and 718. Position 683 is a phosphotyrosine; by autocatalysis (Tyr683). An F-actin-binding region spans residues 694–930 (SLQHADGFSF…PVLPTTHNHK (237 aa)). The tract at residues 763-794 (LRAGKPTASDDTSKPFPRSNSTSSMSSGLPEQ) is disordered. Lys776 carries the post-translational modification N6-acetyllysine. Residues 780 to 791 (RSNSTSSMSSGL) are compositionally biased toward polar residues. Ser783 is subject to Phosphoserine. Phosphothreonine is present on Thr800. The segment covering 807 to 823 (RSKLQLERTVSTSSQPE) has biased composition (polar residues). The tract at residues 807-851 (RSKLQLERTVSTSSQPEENVDRANDMLPKKSEESAAPSRERPKAK) is disordered. 2 positions are modified to phosphoserine: Ser817 and Ser820. Over residues 825 to 849 (NVDRANDMLPKKSEESAAPSRERPK) the composition is skewed to basic and acidic residues. 2 positions are modified to phosphoserine: Ser915 and Ser936. Positions 964–1024 (HQVTSSGDKD…TSETQEGGKK (61 aa)) are disordered. Residues 1010–1019 (TAGQSTSETQ) show a composition bias toward polar residues. Positions 1020–1182 (EGGKKAALGA…VQEISDVVQR (163 aa)) are F-actin-binding.

Belongs to the protein kinase superfamily. Tyr protein kinase family. ABL subfamily. In terms of assembly, interacts with PSMA7. Interacts with CTTN. Found in a complex with ABL1, ABL2, CRK and UNC119; leading to the inhibition of CRK phosphorylation by ABL kinases. It depends on Mg(2+) as a cofactor. Mn(2+) is required as a cofactor. Phosphorylated at Tyr-261 by ABL1 in response to oxidative stress. Phosphorylated by PDGFRB. In terms of processing, polyubiquitinated. Polyubiquitination of ABL2 leads to degradation. Widely expressed.

The protein localises to the cytoplasm. The protein resides in the cytoskeleton. The enzyme catalyses L-tyrosyl-[protein] + ATP = O-phospho-L-tyrosyl-[protein] + ADP + H(+). Stabilized in the inactive form by an association between the SH3 domain and the SH2-TK linker region, interactions of the N-terminal cap, and contributions from an N-terminal myristoyl group and phospholipids. Activated by autophosphorylation as well as by SRC-family kinase-mediated phosphorylation. Activated by RIN1 binding to the SH2 and SH3 domains. Inhibited by imatinib mesylate (Gleevec) which is used for the treatment of chronic myeloid leukemia (CML). Phosphatidylinositol 4,5-bisphosphate (PIP2), a highly abundant phosphoinositide known to regulate cytoskeletal and membrane proteins, inhibits the tyrosine kinase activity. Functionally, non-receptor tyrosine-protein kinase that plays an ABL1-overlapping role in key processes linked to cell growth and survival such as cytoskeleton remodeling in response to extracellular stimuli, cell motility and adhesion and receptor endocytosis. Coordinates actin remodeling through tyrosine phosphorylation of proteins controlling cytoskeleton dynamics like MYH10 (involved in movement); CTTN (involved in signaling); or TUBA1 and TUBB (microtubule subunits). Binds directly F-actin and regulates actin cytoskeletal structure through its F-actin-bundling activity. Involved in the regulation of cell adhesion and motility through phosphorylation of key regulators of these processes such as CRK, CRKL, DOK1 or ARHGAP35. Adhesion-dependent phosphorylation of ARHGAP35 promotes its association with RASA1, resulting in recruitment of ARHGAP35 to the cell periphery where it inhibits RHO. Phosphorylates multiple receptor tyrosine kinases like PDGFRB and other substrates which are involved in endocytosis regulation such as RIN1. In brain, may regulate neurotransmission by phosphorylating proteins at the synapse. ABL2 also acts as a regulator of multiple pathological signaling cascades during infection. Pathogens can highjack ABL2 kinase signaling to reorganize the host actin cytoskeleton for multiple purposes, like facilitating intracellular movement and host cell exit. Finally, functions as its own regulator through autocatalytic activity as well as through phosphorylation of its inhibitor, ABI1. Positively regulates chemokine-mediated T-cell migration, polarization, and homing to lymph nodes and immune-challenged tissues, potentially via activation of NEDD9/HEF1 and RAP1. The polypeptide is Tyrosine-protein kinase ABL2 (ABL2) (Homo sapiens (Human)).